Here is a 162-residue protein sequence, read N- to C-terminus: Large ribosomal subunit protein uL10 (162 aa).

The protein belongs to the universal ribosomal protein uL10 family. Part of the ribosomal stalk of the 50S ribosomal subunit. The N-terminus interacts with L11 and the large rRNA to form the base of the stalk. The C-terminus forms an elongated spine to which L12 dimers bind in a sequential fashion forming a multimeric L10(L12)X complex.

Forms part of the ribosomal stalk, playing a central role in the interaction of the ribosome with GTP-bound translation factors. This is Large ribosomal subunit protein uL10 from Vibrio parahaemolyticus serotype O3:K6 (strain RIMD 2210633).